The primary structure comprises 78 residues: Metallothionein-like protein type 2 (78 aa).

The protein belongs to the metallothionein superfamily. Type 15 family.

Metallothioneins have a high content of cysteine residues that bind various heavy metals. This chain is Metallothionein-like protein type 2, found in Musa acuminata (Banana).